The following is a 311-amino-acid chain: 4-diphosphocytidyl-2-C-methyl-D-erythritol kinase (311 aa).

Lys16 is an active-site residue. 101–111 (PVAGGMAGGSA) contacts ATP. Residue Asp143 is part of the active site.

It belongs to the GHMP kinase family. IspE subfamily.

It carries out the reaction 4-CDP-2-C-methyl-D-erythritol + ATP = 4-CDP-2-C-methyl-D-erythritol 2-phosphate + ADP + H(+). It functions in the pathway isoprenoid biosynthesis; isopentenyl diphosphate biosynthesis via DXP pathway; isopentenyl diphosphate from 1-deoxy-D-xylulose 5-phosphate: step 3/6. In terms of biological role, catalyzes the phosphorylation of the position 2 hydroxy group of 4-diphosphocytidyl-2C-methyl-D-erythritol. The chain is 4-diphosphocytidyl-2-C-methyl-D-erythritol kinase from Rhodococcus jostii (strain RHA1).